The chain runs to 541 residues: Light-independent protochlorophyllide reductase subunit B (541 aa).

Asp-36 contributes to the [4Fe-4S] cluster binding site. Residue Asp-290 is the Proton donor of the active site. Position 425 to 426 (425 to 426) interacts with substrate; it reads GL.

It belongs to the ChlB/BchB/BchZ family. In terms of assembly, protochlorophyllide reductase is composed of three subunits; ChlL, ChlN and ChlB. Forms a heterotetramer of two ChlB and two ChlN subunits. [4Fe-4S] cluster serves as cofactor.

It carries out the reaction chlorophyllide a + oxidized 2[4Fe-4S]-[ferredoxin] + 2 ADP + 2 phosphate = protochlorophyllide a + reduced 2[4Fe-4S]-[ferredoxin] + 2 ATP + 2 H2O. Its pathway is porphyrin-containing compound metabolism; chlorophyll biosynthesis (light-independent). Its function is as follows. Component of the dark-operative protochlorophyllide reductase (DPOR) that uses Mg-ATP and reduced ferredoxin to reduce ring D of protochlorophyllide (Pchlide) to form chlorophyllide a (Chlide). This reaction is light-independent. The NB-protein (ChlN-ChlB) is the catalytic component of the complex. The protein is Light-independent protochlorophyllide reductase subunit B of Synechococcus sp. (strain CC9902).